Reading from the N-terminus, the 628-residue chain is Nucleoside-triphosphatase 1 (628 aa).

An N-terminal signal peptide occupies residues 1-25 (MWLPVYVPLLLVFGVSLSLPQGSLG). The active-site Proton acceptor is E236. An N-linked (GlcNAc...) asparagine glycan is attached at N432.

The protein belongs to the GDA1/CD39 NTPase family. As to quaternary structure, homotetramer.

It is found in the secreted. The protein resides in the parasitophorous vacuole. The enzyme catalyses a ribonucleoside 5'-triphosphate + H2O = a ribonucleoside 5'-diphosphate + phosphate + H(+). May perform an important processing step in the conversion of high energy nucleotides prior to uptake by the parasite and may contribute to intracellular survival and virulence. NTPAse-I has a specific activity 4.5-fold higher than NTPAse-II in hydrolysis of ATP. The primary difference between these isozymes lies in their ability to hydrolyze nucleoside triphosphate versus diphosphate substrates. While NTPAse-II hydrolyzes ATP to ADP and ADP to AMP at almost the same rate, NTPAse-I hydrolyzes ADP to AMP at a much slower rate (0.7% of the rate for ATP). The chain is Nucleoside-triphosphatase 1 (NTP3) from Toxoplasma gondii.